Consider the following 213-residue polypeptide: NADH-quinone oxidoreductase subunit I (213 aa).

2 4Fe-4S ferredoxin-type domains span residues 74–103 (RFIESENERCIGCGLCEKICISNCIRMETS) and 113–142 (GNYSINLGRCIYCGFCAEVCPELAIVHGTE). Residues C83, C86, C89, C93, C122, C125, C128, and C132 each contribute to the [4Fe-4S] cluster site.

The protein belongs to the complex I 23 kDa subunit family. NDH-1 is composed of 14 different subunits. Subunits NuoA, H, J, K, L, M, N constitute the membrane sector of the complex. Requires [4Fe-4S] cluster as cofactor.

It is found in the cell inner membrane. It catalyses the reaction a quinone + NADH + 5 H(+)(in) = a quinol + NAD(+) + 4 H(+)(out). Functionally, NDH-1 shuttles electrons from NADH, via FMN and iron-sulfur (Fe-S) centers, to quinones in the respiratory chain. The immediate electron acceptor for the enzyme in this species is believed to be ubiquinone. Couples the redox reaction to proton translocation (for every two electrons transferred, four hydrogen ions are translocated across the cytoplasmic membrane), and thus conserves the redox energy in a proton gradient. This chain is NADH-quinone oxidoreductase subunit I, found in Campylobacter jejuni subsp. jejuni serotype O:6 (strain 81116 / NCTC 11828).